The following is a 424-amino-acid chain: Adenylyltransferase and sulfurtransferase UBA4 (424 aa).

Residues G76, D97, 104–108 (TNLHR), K121, and 165–166 (DS) contribute to the ATP site. Residues C206 and C209 each coordinate Zn(2+). Residue C223 is the Glycyl thioester intermediate; for adenylyltransferase activity of the active site. Position 283 (C283) interacts with Zn(2+). The 97-residue stretch at 326–422 (RNSDHVLLDV…WYSEVDQNIP (97 aa)) folds into the Rhodanese domain. C382 serves as the catalytic Cysteine persulfide intermediate; for sulfurtransferase activity.

It in the N-terminal section; belongs to the HesA/MoeB/ThiF family. UBA4 subfamily. It depends on Zn(2+) as a cofactor.

It is found in the cytoplasm. The protein resides in the cytosol. It participates in tRNA modification; 5-methoxycarbonylmethyl-2-thiouridine-tRNA biosynthesis. In terms of biological role, plays a central role in 2-thiolation of mcm(5)S(2)U at tRNA wobble positions of cytosolic tRNA(Lys), tRNA(Glu) and tRNA(Gln). Acts by mediating the C-terminal thiocarboxylation of sulfur carrier URM1. Its N-terminus first activates URM1 as acyl-adenylate (-COAMP), then the persulfide sulfur on the catalytic cysteine is transferred to URM1 to form thiocarboxylation (-COSH) of its C-terminus. The reaction probably involves hydrogen sulfide that is generated from the persulfide intermediate and that acts as a nucleophile towards URM1. Subsequently, a transient disulfide bond is formed. Does not use thiosulfate as sulfur donor; NFS1 probably acting as a sulfur donor for thiocarboxylation reactions. Prior mcm(5) tRNA modification by the elongator complex is required for 2-thiolation. May also be involved in protein urmylation. The sequence is that of Adenylyltransferase and sulfurtransferase UBA4 from Meyerozyma guilliermondii (strain ATCC 6260 / CBS 566 / DSM 6381 / JCM 1539 / NBRC 10279 / NRRL Y-324) (Yeast).